Reading from the N-terminus, the 320-residue chain is Lactamase-like protein GME11357 (320 aa).

4 residues coordinate Zn(2+): H106, H108, D110, and H111. D110 functions as the Proton donor/acceptor in the catalytic mechanism.

It belongs to the metallo-beta-lactamase superfamily. It depends on Zn(2+) as a cofactor.

The protein operates within secondary metabolite biosynthesis. In terms of biological role, lactamase-like protein; part of the gene cluster that mediates the biosynthesis of dibenzodioxocinones such as pestalotiollide B, a novel class of inhibitors against cholesterol ester transfer protein (CEPT). The biosynthesis initiates from condensation of acetate and malonate units catalyzed by the non-reducing PKS pks8/GME11356. Pks8/GME11356 lacks a thioesterase (TE) domain, which is important to the cyclizing of the third ring of atrochrysone carboxylic acid, and the esterase GME11355 might play the role of TE and catalyzes the cyclization reaction of the C ring. The lactamase-like protein GME11357 (or other beta-lactamases in Pestalotiopsis microspora) probably hydrolyzes the thioester bond between the ACP of pks8/GME11356 and the intermediate to release atrochrysone carboxylic acid, which is spontaneously dehydrates to form endocrocin anthrone. Endocrocin anthrone is further converted to emodin via the endocrocin intermediate. Emodin is then oxidized by several enzymes such as the Baeyer-Villiger oxidase GME11358, the oxidoreductase GME11367, the short chain dehydrogenase/reductase GME11373, as well as by other oxidoreductases from the cluster, to modify the A and C rings and open the B ring, and finally yield monodictyphenone. The prenyltransferase GME11375 may catalyze the addition reaction between the C5 side chains and the carbon bone of dibenzodioxocinones. The remaining biochemical reactions to the final product dibenzodioxocinones should be methylation catalyzed by methyltransferase GME11366 and reduction and lactonization reaction catalyzed by a series of oxidordeuctases. This chain is Lactamase-like protein GME11357, found in Pestalotiopsis microspora.